Consider the following 196-residue polypeptide: ATP-dependent Clp protease proteolytic subunit (196 aa).

The active-site Nucleophile is the Ser-101. The active site involves His-126.

This sequence belongs to the peptidase S14 family. Component of the chloroplastic Clp protease core complex.

It localises to the plastid. Its subcellular location is the chloroplast stroma. It catalyses the reaction Hydrolysis of proteins to small peptides in the presence of ATP and magnesium. alpha-casein is the usual test substrate. In the absence of ATP, only oligopeptides shorter than five residues are hydrolyzed (such as succinyl-Leu-Tyr-|-NHMec, and Leu-Tyr-Leu-|-Tyr-Trp, in which cleavage of the -Tyr-|-Leu- and -Tyr-|-Trp bonds also occurs).. Its function is as follows. Cleaves peptides in various proteins in a process that requires ATP hydrolysis. Has a chymotrypsin-like activity. Plays a major role in the degradation of misfolded proteins. The polypeptide is ATP-dependent Clp protease proteolytic subunit (Lobularia maritima (Sweet alyssum)).